A 194-amino-acid polypeptide reads, in one-letter code: Putative manganese efflux pump MntP (194 aa).

Transmembrane regions (helical) follow at residues 3–23 (PFSI…AAIG), 37–57 (LRAG…GWLL), 69–89 (DHWI…VAGL), 110–132 (LGLA…SLAF), 147–167 (CTFS…NLIG), and 172–192 (MLGG…HLSG).

Belongs to the MntP (TC 9.B.29) family.

It is found in the cell inner membrane. In terms of biological role, probably functions as a manganese efflux pump. The polypeptide is Putative manganese efflux pump MntP (Xanthomonas euvesicatoria pv. vesicatoria (strain 85-10) (Xanthomonas campestris pv. vesicatoria)).